The following is a 151-amino-acid chain: 3-dehydroquinate dehydratase (151 aa).

The active-site Proton acceptor is the Y26. Substrate is bound by residues N75, H81, and D88. H101 functions as the Proton donor in the catalytic mechanism. Residues 102 to 103 and R112 contribute to the substrate site; that span reads LS.

It belongs to the type-II 3-dehydroquinase family. Homododecamer.

The catalysed reaction is 3-dehydroquinate = 3-dehydroshikimate + H2O. It functions in the pathway metabolic intermediate biosynthesis; chorismate biosynthesis; chorismate from D-erythrose 4-phosphate and phosphoenolpyruvate: step 3/7. Functionally, catalyzes a trans-dehydration via an enolate intermediate. This is 3-dehydroquinate dehydratase from Shewanella halifaxensis (strain HAW-EB4).